A 556-amino-acid chain; its full sequence is MSRGRARLQPPPPGTRTTTLAAVLVLVLLAVVALPLRCDAASAGGEEEEEQQPLDYREALEKSLLYFEAQRSGRLPYSQRVTWRGHSGLTDGLQQGVDLVGGYYDAGDHVKFGLPMAFTVTMLSWGAIDFAADIAAAGEWRHALEAIKWGTDYFVKAHTHPFVYWAEVGDGDTDHYCWQRPEDMTTSRQAYRVDRDNPGSDLAGETAAALAAASIVFRRSDPHYSHLLLHHAQQLFEFGDTYRGSYDSSIEEVRSYYASVSGYHDELLWAALWLHRATGKEEYLRYAVDNADSFGGVGWAITEFSWDVKYAGLQVLAAKLLLDGDPQAAAHRGVLEKYREKAEHYLCACLGRNINGADNVDRSPGGMLYVRQWNNLQYASSAAFLLTAYSHYLSSSSASASAALRCPGGAAAAAEMVSLARSQADYILGRNPLRLSYMVGYGRRYPARVHHRGASIVSHKEDGRFIGCVQGFDDWFGRGRANPNVLAGAIVGGPSRRDEFRDDRANYMQTEACTYNTAPMVAVFARLHRLTTAITTAAAAEDPDGGSPDRRSVDRR.

The signal sequence occupies residues 1–33 (MSRGRARLQPPPPGTRTTTLAAVLVLVLLAVVA). D108 serves as the catalytic Nucleophile. Active-site residues include H450, D502, and E511.

This sequence belongs to the glycosyl hydrolase 9 (cellulase E) family.

The protein localises to the secreted. The enzyme catalyses Endohydrolysis of (1-&gt;4)-beta-D-glucosidic linkages in cellulose, lichenin and cereal beta-D-glucans.. The protein is Endoglucanase 22 (GLU11) of Oryza sativa subsp. japonica (Rice).